A 341-amino-acid chain; its full sequence is LRP2-binding protein (341 aa).

The TPR repeat unit spans residues 56–89 (VQANFLLGQLFFEEGWYEDALLQFEKVKDEDNQA). Sel1-like repeat units lie at residues 90–122 (LYQA…TSDC), 130–165 (YAAA…DNGN), 170–203 (LKAQ…GNGS), 204–239 (LESQ…ERGN), 240–271 (VYAQ…SHDN), and 291–326 (AIAT…QLDA).

It localises to the cytoplasm. Its function is as follows. May act as an adapter that regulates LRP2 function. The chain is LRP2-binding protein (lrp2bp) from Xenopus laevis (African clawed frog).